A 223-amino-acid polypeptide reads, in one-letter code: Phosphoribosylformylglycinamidine synthase subunit PurQ (223 aa).

In terms of domain architecture, Glutamine amidotransferase type-1 spans 3 to 223 (SAVVQLPGLN…FASALDVVAA (221 aa)). Cysteine 86 (nucleophile) is an active-site residue. Catalysis depends on residues histidine 196 and glutamate 198.

Part of the FGAM synthase complex composed of 1 PurL, 1 PurQ and 2 PurS subunits.

Its subcellular location is the cytoplasm. The enzyme catalyses N(2)-formyl-N(1)-(5-phospho-beta-D-ribosyl)glycinamide + L-glutamine + ATP + H2O = 2-formamido-N(1)-(5-O-phospho-beta-D-ribosyl)acetamidine + L-glutamate + ADP + phosphate + H(+). The catalysed reaction is L-glutamine + H2O = L-glutamate + NH4(+). It participates in purine metabolism; IMP biosynthesis via de novo pathway; 5-amino-1-(5-phospho-D-ribosyl)imidazole from N(2)-formyl-N(1)-(5-phospho-D-ribosyl)glycinamide: step 1/2. Functionally, part of the phosphoribosylformylglycinamidine synthase complex involved in the purines biosynthetic pathway. Catalyzes the ATP-dependent conversion of formylglycinamide ribonucleotide (FGAR) and glutamine to yield formylglycinamidine ribonucleotide (FGAM) and glutamate. The FGAM synthase complex is composed of three subunits. PurQ produces an ammonia molecule by converting glutamine to glutamate. PurL transfers the ammonia molecule to FGAR to form FGAM in an ATP-dependent manner. PurS interacts with PurQ and PurL and is thought to assist in the transfer of the ammonia molecule from PurQ to PurL. The chain is Phosphoribosylformylglycinamidine synthase subunit PurQ from Rhizobium etli (strain ATCC 51251 / DSM 11541 / JCM 21823 / NBRC 15573 / CFN 42).